The following is an 83-amino-acid chain: Small ribosomal subunit protein bS16 (83 aa).

This sequence belongs to the bacterial ribosomal protein bS16 family.

The polypeptide is Small ribosomal subunit protein bS16 (Syntrophus aciditrophicus (strain SB)).